An 854-amino-acid chain; its full sequence is Arsenate respiratory reductase molybdopterin-containing subunit ArrA (854 aa).

A signal peptide (tat-type signal) is located at residues 1-41 (MKKENQVNLGRRQLLKSTAAGTVLTGIGGTLSFTPIVEGIA). In terms of domain architecture, 4Fe-4S Mo/W bis-MGD-type spans 54–110 (GEWLATTCQGCTSWCAKQIYVMDGRALKVRGNPNSGVHGMSSCPRQHLSLQQVYDPD). Residues Cys-61, Cys-64, Cys-68, and Cys-96 each contribute to the [4Fe-4S] cluster site. Arg-165 contacts arsenite. Tyr-166 contacts arsenate. Position 189 (His-189) interacts with arsenite. Ser-190 contacts arsenate. Cys-193 contributes to the Mo-bis(molybdopterin guanine dinucleotide) binding site. Lys-198 lines the arsenate pocket. Residue Tyr-210 participates in arsenite binding.

Belongs to the prokaryotic molybdopterin-containing oxidoreductase family. As to quaternary structure, heterodimer composed of one large subunit (ArrA) and one small subunit (ArrB). Requires [4Fe-4S] cluster as cofactor. Mo-bis(molybdopterin guanine dinucleotide) is required as a cofactor. Post-translationally, predicted to be exported by the Tat system. The position of the signal peptide cleavage has not been experimentally proven.

Its subcellular location is the periplasm. The enzyme catalyses arsenite + A + H2O = arsenate + AH2 + H(+). With respect to regulation, phosphate is a competitive inhibitor. Functionally, component of the arsenate respiratory reductase (Arr) complex, which catalyzes the reduction of arsenate (As(V)) to arsenite (As(III)). ArrA is the arsenate-binding subunit. The periplasmic localization of this complex may allow the cell to couple arsenate reduction to energy production before arsenate can be transported to the cell cytoplasm and enter the ars detoxification pathway, an energy-requiring process. This is Arsenate respiratory reductase molybdopterin-containing subunit ArrA from Shewanella sp. (strain ANA-3).